A 118-amino-acid polypeptide reads, in one-letter code: Large ribosomal subunit protein bL20 (118 aa).

The protein belongs to the bacterial ribosomal protein bL20 family.

In terms of biological role, binds directly to 23S ribosomal RNA and is necessary for the in vitro assembly process of the 50S ribosomal subunit. It is not involved in the protein synthesizing functions of that subunit. This is Large ribosomal subunit protein bL20 from Nostoc punctiforme (strain ATCC 29133 / PCC 73102).